The chain runs to 805 residues: U-box domain-containing protein 32 (805 aa).

2 disordered regions span residues 181–205 (SNNR…SEKL) and 226–284 (EKDT…EREG). The segment covering 226–239 (EKDTGQLEREKVEP) has biased composition (basic and acidic residues). A compositionally biased stretch (low complexity) spans 245–257 (FSSGSSSSFGEPV). Residues 331–434 (LEGLCIKESS…EVNALRRLVK (104 aa)) are a coiled coil. The Protein kinase domain occupies 460-718 (FDPSWKLGEG…FIDRMKAPEV (259 aa)). Residues 466–474 (LGEGKYGSV) and Lys-487 each bind ATP. A U-box domain is found at 734 to 805 (RPPSHYLCPI…LAIQDWQNQW (72 aa)).

This sequence belongs to the protein kinase superfamily. Ser/Thr protein kinase family.

The catalysed reaction is S-ubiquitinyl-[E2 ubiquitin-conjugating enzyme]-L-cysteine + [acceptor protein]-L-lysine = [E2 ubiquitin-conjugating enzyme]-L-cysteine + N(6)-ubiquitinyl-[acceptor protein]-L-lysine.. It participates in protein modification; protein ubiquitination. Its function is as follows. Functions as an E3 ubiquitin ligase. The polypeptide is U-box domain-containing protein 32 (PUB32) (Arabidopsis thaliana (Mouse-ear cress)).